We begin with the raw amino-acid sequence, 325 residues long: MVKIAVDMMGGDDAPGIVLDAVKKAVEDFKDLEIILFGDESQYNLSHERIEFRHCTEKIEMEDEPVRAIKRKKDSSMVKMAEAVKSGEADGCVSAGNTGALMSAGLFIVGRIKGVARPALVVTLPTTDGKGFVFLDVGANADAKAEHLLQYAQLGNIYAQKIRGIQNPSVSLLNIGTEAAKGNSLTKKAYDLFEKNQSFNFTGNIEAKTLMDGNVDVVVTDGYTGNMVLKNLEGTAKSIGKMLKETIMSSFKNKLAGAVLKKDLDTFAKKMDYSEYGGSVLLGLDGTVVKAHGSSNAKAFYSAIRQAKIAGEENIVQIMKDTVGE.

The protein belongs to the PlsX family. Homodimer. Probably interacts with PlsY.

Its subcellular location is the cytoplasm. It carries out the reaction a fatty acyl-[ACP] + phosphate = an acyl phosphate + holo-[ACP]. The protein operates within lipid metabolism; phospholipid metabolism. Its function is as follows. Catalyzes the reversible formation of acyl-phosphate (acyl-PO(4)) from acyl-[acyl-carrier-protein] (acyl-ACP). This enzyme utilizes acyl-ACP as fatty acyl donor, but not acyl-CoA. This chain is Phosphate acyltransferase, found in Staphylococcus epidermidis (strain ATCC 35984 / DSM 28319 / BCRC 17069 / CCUG 31568 / BM 3577 / RP62A).